The sequence spans 105 residues: Pyrimidine/purine nucleoside phosphorylase (105 aa).

The protein belongs to the nucleoside phosphorylase PpnP family.

It carries out the reaction a purine D-ribonucleoside + phosphate = a purine nucleobase + alpha-D-ribose 1-phosphate. The enzyme catalyses adenosine + phosphate = alpha-D-ribose 1-phosphate + adenine. The catalysed reaction is cytidine + phosphate = cytosine + alpha-D-ribose 1-phosphate. It catalyses the reaction guanosine + phosphate = alpha-D-ribose 1-phosphate + guanine. It carries out the reaction inosine + phosphate = alpha-D-ribose 1-phosphate + hypoxanthine. The enzyme catalyses thymidine + phosphate = 2-deoxy-alpha-D-ribose 1-phosphate + thymine. The catalysed reaction is uridine + phosphate = alpha-D-ribose 1-phosphate + uracil. It catalyses the reaction xanthosine + phosphate = alpha-D-ribose 1-phosphate + xanthine. Functionally, catalyzes the phosphorolysis of diverse nucleosides, yielding D-ribose 1-phosphate and the respective free bases. Can use uridine, adenosine, guanosine, cytidine, thymidine, inosine and xanthosine as substrates. Also catalyzes the reverse reactions. This is Pyrimidine/purine nucleoside phosphorylase from Albidiferax ferrireducens (strain ATCC BAA-621 / DSM 15236 / T118) (Rhodoferax ferrireducens).